Consider the following 178-residue polypeptide: MFDATTILAYKGKNKAVIGGDGQVTFGNTVLKGNATKIRTLYKDQILAGFAGSTADAFNLFDMFEGHLEACKGDLLKSVIAFSKEWRKDKVLRRLEAMMIVLNKEKIFILSGNGDVVEPEDGAIASIGSGGNFAISAARALAKHSSLDEEELVKESLMIAGELCIYTNQNIKILKLED.

Residue T5 is part of the active site. G161, C164, and T167 together coordinate Na(+).

It belongs to the peptidase T1B family. HslV subfamily. A double ring-shaped homohexamer of HslV is capped on each side by a ring-shaped HslU homohexamer. The assembly of the HslU/HslV complex is dependent on binding of ATP.

It is found in the cytoplasm. It catalyses the reaction ATP-dependent cleavage of peptide bonds with broad specificity.. Allosterically activated by HslU binding. Functionally, protease subunit of a proteasome-like degradation complex believed to be a general protein degrading machinery. The protein is ATP-dependent protease subunit HslV of Aliarcobacter butzleri (strain RM4018) (Arcobacter butzleri).